The sequence spans 479 residues: Aldehyde dehydrogenase family 3 member B2 (479 aa).

Residues Glu-223 and Cys-257 contribute to the active site. Cys-476 is modified (cysteine methyl ester). Cys-476 carries the S-geranylgeranyl cysteine lipid modification. The propeptide at 477-479 (TLL) is removed in mature form.

This sequence belongs to the aldehyde dehydrogenase family. Post-translationally, geranylgeranylation is important for localization to lipid droplets and enzyme activity. Expressed in testis, white adipose tissue, lung, small intestine, kidney, spleen and liver.

The protein localises to the lipid droplet. The catalysed reaction is an aldehyde + NAD(+) + H2O = a carboxylate + NADH + 2 H(+). It carries out the reaction a long-chain fatty aldehyde + NAD(+) + H2O = a long-chain fatty acid + NADH + 2 H(+). The enzyme catalyses a medium-chain fatty aldehyde + NAD(+) + H2O = a medium-chain fatty acid + NADH + 2 H(+). It catalyses the reaction hexadecanoate + NADH + 2 H(+) = hexadecanal + NAD(+) + H2O. The catalysed reaction is octanal + NAD(+) + H2O = octanoate + NADH + 2 H(+). The protein operates within alcohol metabolism; ethanol degradation; acetate from ethanol: step 2/2. In terms of biological role, oxidizes medium and long chain fatty aldehydes in lipid droplets into non-toxic fatty acids. This is Aldehyde dehydrogenase family 3 member B2 from Mus musculus (Mouse).